The chain runs to 218 residues: Adenylate kinase (218 aa).

ATP is bound at residue glycine 10 to threonine 15. Residues serine 30 to valine 59 are NMP. AMP is bound by residues threonine 31, arginine 36, glycine 57 to valine 59, glycine 85 to arginine 88, and glutamine 92. The segment at glycine 122–aspartate 159 is LID. Residues arginine 123 and valine 132–tyrosine 133 each bind ATP. The segment at proline 139–glutamine 160 is disordered. Residues arginine 156 and arginine 167 each coordinate AMP. Residue glycine 203 coordinates ATP.

Belongs to the adenylate kinase family. As to quaternary structure, monomer.

It is found in the cytoplasm. It carries out the reaction AMP + ATP = 2 ADP. It functions in the pathway purine metabolism; AMP biosynthesis via salvage pathway; AMP from ADP: step 1/1. Catalyzes the reversible transfer of the terminal phosphate group between ATP and AMP. Plays an important role in cellular energy homeostasis and in adenine nucleotide metabolism. This is Adenylate kinase from Alcanivorax borkumensis (strain ATCC 700651 / DSM 11573 / NCIMB 13689 / SK2).